Reading from the N-terminus, the 537-residue chain is Phosphoenolpyruvate carboxykinase (ATP) (537 aa).

Substrate is bound by residues R61, Y195, and K201. ATP-binding positions include K201, H220, and 236–244; that span reads GLSGTGKTT. Mn(2+) contacts are provided by K201 and H220. Mn(2+) is bound at residue D257. Residues E285, R323, and T448 each coordinate ATP. A substrate-binding site is contributed by R323.

Belongs to the phosphoenolpyruvate carboxykinase (ATP) family. It depends on Mn(2+) as a cofactor.

It is found in the cytoplasm. It catalyses the reaction oxaloacetate + ATP = phosphoenolpyruvate + ADP + CO2. The protein operates within carbohydrate biosynthesis; gluconeogenesis. Functionally, involved in the gluconeogenesis. Catalyzes the conversion of oxaloacetate (OAA) to phosphoenolpyruvate (PEP) through direct phosphoryl transfer between the nucleoside triphosphate and OAA. This chain is Phosphoenolpyruvate carboxykinase (ATP), found in Parvibaculum lavamentivorans (strain DS-1 / DSM 13023 / NCIMB 13966).